The chain runs to 570 residues: Interleukin-1 receptor accessory protein (570 aa).

The first 20 residues, 1–20, serve as a signal peptide directing secretion; that stretch reads MGLPWCLMSLFFCGILQSHA. Ig-like C2-type domains are found at residues 21–128, 141–230, and 243–348; these read SERC…VAFP, PMRL…RTMT, and PHIY…AKVK. At 21–367 the chain is on the extracellular side; that stretch reads SERCDDWGLD…VELACGFGAT (347 aa). Disulfide bonds link cysteine 24/cysteine 122, cysteine 47/cysteine 114, cysteine 137/cysteine 181, cysteine 160/cysteine 212, and cysteine 266/cysteine 332. N-linked (GlcNAc...) asparagine glycosylation occurs at asparagine 57. Residues 69 to 85 are essential for interaction with PTPRD; the sequence is IWYWTRQDRDLEEPINF. Asparagine 107, asparagine 111, asparagine 118, asparagine 157, asparagine 196, and asparagine 209 each carry an N-linked (GlcNAc...) asparagine glycan. Residues 368 to 388 traverse the membrane as a helical segment; that stretch reads VFLVVVLIVVYHVYWLEMVLF. Residues 389–570 lie on the Cytoplasmic side of the membrane; the sequence is YRAHFGTDET…GLSYSSLKNV (182 aa). The TIR domain maps to 403–546; it reads KEYDIYVSYA…RFWKQLQVAM (144 aa). Residue glutamate 482 is part of the active site. Residues 550–570 form a disordered region; sequence KSPRWSSSDKQGLSYSSLKNV. A compositionally biased stretch (polar residues) spans 553–570; it reads RWSSSDKQGLSYSSLKNV. Phosphoserine is present on serine 557.

It belongs to the interleukin-1 receptor family. In terms of assembly, the interleukin-36 receptor complex is a heterodimer of IL1RL2 and IL1RAP; the association is inhibited by IL36RN. The interleukin-1 receptor complex is a heterodimer of IL1R1 and IL1RAP. Associates with IL1R2 to form a non-signaling interleukin-1 receptor complex. Interacts with IL-33-bound IL1RL1 to form the minimal interleukin-33 signaling complex with a 1:1:1 stoichiometry. Interacts with KIT (independently of stimulation with KITLG/SCF). A mast cell-specific KITLG/SCF-induced interleukin-33 signaling complex contains IL1RL1, IL1RAP, KIT and MYD88. Interacts (via the first immunoglobilin domain) with PTPRD (via the third immunoglobilin domain); induces pre- and postsynaptic differentiation of neurons. Highly expressed in hypothalamus, in the dentate gyrus of hippocampus, cerebral cortex, cerebellum, liver and lung.

Its subcellular location is the membrane. The catalysed reaction is NAD(+) + H2O = ADP-D-ribose + nicotinamide + H(+). Its function is as follows. Coreceptor for IL1RL2 in the IL-36 signaling system. Coreceptor with IL1R1 in the IL-1 signaling system. Associates with IL1R1 bound to IL1B to form the high affinity interleukin-1 receptor complex which mediates interleukin-1-dependent activation of NF-kappa-B and other pathways. Signaling involves the recruitment of adapter molecules such as TOLLIP, MYD88, and IRAK1 or IRAK2 via the respective TIR domains of the receptor/coreceptor subunits. Recruits TOLLIP to the signaling complex. Does not bind to interleukin-1 alone; binding of IL1RN to IL1R1, prevents its association with IL1R1 to form a signaling complex. The cellular response is modulated through a non-signaling association with the membrane IL1R2 decoy receptor. Coreceptor for IL1RL1 in the IL-33 signaling system. Can bidirectionally induce pre- and postsynaptic differentiation of neurons by trans-synaptically binding to PTPRD. May play a role in IL1B-mediated costimulation of IFNG production from T-helper 1 (Th1) cells. The chain is Interleukin-1 receptor accessory protein (Il1rap) from Rattus norvegicus (Rat).